A 278-amino-acid polypeptide reads, in one-letter code: F-box only protein 17 (278 aa).

Positions 15-62 (SLALDALPPELLVQVLSHVPPRSLVTRCRPVCRAWRDIVDGPTVWLLQ) constitute an F-box domain. The FBA domain occupies 99-275 (YCLRAPFGRN…VTHSSVRVRI (177 aa)).

Part of a SCF (SKP1-cullin-F-box) protein ligase complex. Interacts with SKP1 and CUL1. As to expression, expressed in heart, skeletal muscle, liver and kidney. Expressed at lower levels in spleen and brain.

Substrate-recognition component of the SCF (SKP1-CUL1-F-box protein)-type E3 ubiquitin ligase complex. Able to recognize and bind denatured glycoproteins, which are modified with complex-type oligosaccharides. Also recognizes sulfated glycans. Does not bind high-mannose glycoproteins. In Homo sapiens (Human), this protein is F-box only protein 17 (FBXO17).